The primary structure comprises 163 residues: MLNMKSFALLMLFATLVGVTIAYDPNGKCGRQYGKCRAGQCCSQYGYCGSGSKYCAHNTPLSEIEPTAAGQCYRGRCSGGLCCSKYGYCGSGPAYCGLGMCQGSCLPDMPNHPAQIQARTEAAQAEAQAEAYNQANEAAQVEAYYQAQTQAQPQVEPAVTKAP.

An N-terminal signal peptide occupies residues 1–22; sequence MLNMKSFALLMLFATLVGVTIA. 2 Chitin-binding type-1 domains span residues 26–66 and 69–107; these read NGKC…EIEP and AGQC…SCLP. Cystine bridges form between Cys29/Cys42, Cys36/Cys48, and Cys41/Cys55. The propeptide occupies 58-67; that stretch reads NTPLSEIEPT. Intrachain disulfides connect Cys72-Cys83, Cys77-Cys89, Cys82-Cys96, and Cys101-Cys105. A propeptide spanning residues 100–163 is cleaved from the precursor; sequence MCQGSCLPDM…QVEPAVTKAP (64 aa).

In terms of tissue distribution, expressed in roots, flowers, stem and leaves.

In terms of biological role, antimicrobial peptide. The chain is Antimicrobial peptide 2 from Stellaria media (Common chickweed).